The primary structure comprises 929 residues: Protein unc-45 homolog A (929 aa).

TPR repeat units lie at residues 6 to 39, 43 to 76, and 77 to 110; these read VEQL…DATP, AVLH…DGGD, and VKAL…EPKN. Lys55 is subject to N6-acetyllysine. The residue at position 468 (Lys468) is an N6-acetyllysine.

Interacts with PGR isoforms A and B as well as with NR3C1 in the absence of ligand, and with HSP90AB1. Binding to HSP90AB1 involves 2 UNC45A monomers per HSP90AB1 dimer.

Its subcellular location is the cytoplasm. It localises to the perinuclear region. The protein resides in the nucleus. May act as co-chaperone for HSP90 (Potential). Prevents the stimulation of HSP90AB1 ATPase activity by AHSA1. Positive factor in promoting PGR function in the cell. May be necessary for proper folding of myosin (Potential). Necessary for normal cell proliferation. Necessary for normal myotube formation and myosin accumulation during muscle cell development. May play a role in erythropoiesis in stroma cells in the spleen. This Pongo abelii (Sumatran orangutan) protein is Protein unc-45 homolog A (UNC45A).